The sequence spans 309 residues: Porphobilinogen deaminase (309 aa).

At Cys-241 the chain carries S-(dipyrrolylmethanemethyl)cysteine.

The protein belongs to the HMBS family. Monomer. Dipyrromethane serves as cofactor.

The catalysed reaction is 4 porphobilinogen + H2O = hydroxymethylbilane + 4 NH4(+). Its pathway is porphyrin-containing compound metabolism; protoporphyrin-IX biosynthesis; coproporphyrinogen-III from 5-aminolevulinate: step 2/4. In terms of biological role, tetrapolymerization of the monopyrrole PBG into the hydroxymethylbilane pre-uroporphyrinogen in several discrete steps. This chain is Porphobilinogen deaminase, found in Bacillus thuringiensis subsp. konkukian (strain 97-27).